The chain runs to 188 residues: MSIKSDRWIEKMALEHGMISPFQAGQVRENQNGRIISYGVSSYGYDVRCSNEFKIFTNINSAIVDPKAFDENSFVDVQSDVCIIPPNSFALARTVEYFRIPRNILTICLGKSTYARCGIIVNVTPLEPEWEGHVTLEFSNTTTLPAKIYAYEGVAQMLFLEANEVCAVSYRDRNGKYQGQTGVTLPRT.

Residues 111–116, 135–137, Q156, Y170, and Q180 contribute to the dCTP site; these read KSTYAR and TLE. Residue E137 is the Proton donor/acceptor of the active site.

Belongs to the dCTP deaminase family. In terms of assembly, homotrimer.

The catalysed reaction is dCTP + H2O + H(+) = dUTP + NH4(+). The protein operates within pyrimidine metabolism; dUMP biosynthesis; dUMP from dCTP (dUTP route): step 1/2. Catalyzes the deamination of dCTP to dUTP. The polypeptide is dCTP deaminase (Legionella pneumophila (strain Paris)).